The following is a 423-amino-acid chain: Phthiocerol/phthiodiolone dimycocerosyl transferase (423 aa).

His125 acts as the Proton acceptor in catalysis.

This sequence belongs to the acyltransferase PapA5 family. As to quaternary structure, monomer. Interacts directly with the acyl carrier protein (ACP) domain of the mycocerosic acid synthase (mas) protein.

It carries out the reaction 2 a mycocerosyl-[mycocerosic acid synthase] + a phthiocerol = a dimycocerosyl phthiocerol + 2 holo-[mycocerosic acid synthase].. The enzyme catalyses 2 a mycocerosyl-[mycocerosic acid synthase] + a phthiodiolone = a dimycocerosyl phthiodiolone + 2 holo-[mycocerosic acid synthase].. The catalysed reaction is 2 a mycocerosyl-[mycocerosic acid synthase] + a phenolphthiocerol = a dimycocerosyl phenolphthiocerol + 2 holo-[mycocerosic acid synthase].. Its function is as follows. Catalyzes diesterification of phthiocerol, phthiodiolone, and phenolphthiocerol with mycocerosic acids, the final step in the phthiocerol, phthiodiolone and phenolphthiocerol dimycocerosate esters (PDIM) synthesis. Can directly transfer the mycocerosate bound to the mycocerosic acid synthase (mas) onto the substrate alcohols. The polypeptide is Phthiocerol/phthiodiolone dimycocerosyl transferase (papA5) (Mycobacterium leprae (strain TN)).